Here is a 247-residue protein sequence, read N- to C-terminus: C-type lectin domain family 7 member A (247 aa).

The Cytoplasmic segment spans residues 1-44 (MEYHPDLENLDEDGYTQLHFDSRSNTRIAVVSEKGSCVASPPWR). Residues 15–18 (YTQL) carry the ITAM-like motif. A helical; Signal-anchor for type II membrane protein membrane pass occupies residues 45 to 65 (LIAVILGILCLVILVIAVVLG). Over 66–247 (TMAIWRPNSG…CSICEKKFSM (182 aa)) the chain is Extracellular. The interval 81–105 (NGYFPSRNKENHSQPTQSPLEESVT) is disordered. The N-linked (GlcNAc...) asparagine glycan is linked to Asn-91. The span at 93–105 (SQPTQSPLEESVT) shows a compositional bias: polar residues. 3 disulfide bridges follow: Cys-120–Cys-131, Cys-148–Cys-241, and Cys-220–Cys-233. Positions 127–242 (YEKSCYLFSP…CSVPSCSICE (116 aa)) constitute a C-type lectin domain. 146–153 (RQCSQLGS) contacts (1,3-beta-D-glucosyl)n. A divalent metal cation is bound by residues Lys-157, Asp-159, and Glu-163. Glu-195 is a (1,3-beta-D-glucosyl)n binding site. Glu-242 is a binding site for a divalent metal cation.

As to quaternary structure, homodimer. Interacts with SYK; participates in leukocyte activation in presence of fungal pathogens. Interacts with CD37; this interaction controls CLEC7A-mediated IL-6 production. In terms of processing, phosphorylated on tyrosine residues in response to beta-glucan binding. As to expression, detected in dendritic cells, in paracortical and medullary regions of lymph nodes, and in spleen red pulp and white pulp.

Its subcellular location is the cell membrane. In terms of biological role, lectin that functions as a pattern recognizing receptor (PRR) specific for beta-1,3-linked and beta-1,6-linked glucans, which constitute cell wall constituents from pathogenic bacteria and fungi. Necessary for the TLR2-mediated inflammatory response and activation of NF-kappa-B: upon beta-glucan binding, recruits SYK via its ITAM motif and promotes a signaling cascade that activates some CARD domain-BCL10-MALT1 (CBM) signalosomes, leading to the activation of NF-kappa-B and MAP kinase p38 (MAPK11, MAPK12, MAPK13 and/or MAPK14) pathways which stimulate expression of genes encoding pro-inflammatory cytokines and chemokines. Enhances cytokine production in macrophages and dendritic cells. Mediates production of reactive oxygen species in the cell. Mediates phagocytosis of C.albicans conidia. Binds T-cells in a way that does not involve their surface glycans and plays a role in T-cell activation. Stimulates T-cell proliferation. Induces phosphorylation of SCIMP after binding beta-glucans. This is C-type lectin domain family 7 member A (CLEC7A) from Macaca mulatta (Rhesus macaque).